The sequence spans 703 residues: Cyclic AMP-dependent transcription factor ATF-6 beta (703 aa).

Ala-2 carries the post-translational modification N-acetylalanine. Residues 2 to 86 (AELMLLSEIA…ELLPIFPDLQ (85 aa)) form a transcription activation region. Residues 2–396 (AELMLLSEIA…ELKLGSGNRK (395 aa)) are Cytoplasmic-facing. Disordered regions lie at residues 87-114 (VKSE…PSSE), 229-248 (LDGS…QPKP), and 293-317 (EGPA…GNSC). The span at 89-114 (SEPSSPCSSSSLSSESSRLSTEPSSE) shows a compositional bias: low complexity. The bZIP domain maps to 325-388 (LLKRQQRMIK…EALLAENSEL (64 aa)). Residues 327 to 347 (KRQQRMIKNRESACQSRRKKK) form a basic motif region. Positions 350–357 (LQGLEARL) are leucine-zipper. Residues 397–417 (VVCIMVFLLFIAFNFGPVSIS) form a helical; Signal-anchor for type II membrane protein membrane-spanning segment. Over 418 to 703 (EPPSAPISPR…SHQPLYLNHP (286 aa)) the chain is Lumenal. A disordered region spans residues 447-479 (PVQGVEPLQGSSQGPKEPQPSPTDQPSFSNLTA). Residues Asn-476 and Asn-505 are each glycosylated (N-linked (GlcNAc...) asparagine). The interval 521–565 (QRHQRGRRKIPQRAQERQKSQPRKKSPPVKAVPIQPPGPPERDSV) is disordered. Over residues 522–531 (RHQRGRRKIP) the composition is skewed to basic residues. Asn-610, Asn-627, and Asn-676 each carry an N-linked (GlcNAc...) asparagine glycan. A compositionally biased stretch (polar residues) spans 660–676 (STVPPSLRKQPSPTPGN). A disordered region spans residues 660 to 703 (STVPPSLRKQPSPTPGNATGGPLPVSAASQAHQASHQPLYLNHP). Low complexity predominate over residues 685 to 696 (SAASQAHQASHQ).

Belongs to the bZIP family. ATF subfamily. As to quaternary structure, homodimer and heterodimer with ATF6-alpha. The dimer interacts with the nuclear transcription factor Y (NF-Y) trimer through direct binding to NF-Y subunit C (NF-YC). In terms of processing, N-glycosylated. During unfolded protein response, a fragment of approximately 60 kDa containing the cytoplasmic transcription factor domain is released by proteolysis. The cleavage is probably performed sequentially by site-1 (MBTPS1, S1P) and site-2 (MBTPS2, S2P) proteases. As to expression, ubiquitous.

Its subcellular location is the endoplasmic reticulum membrane. The protein localises to the nucleus. Its function is as follows. Precursor of the transcription factor form (Processed cyclic AMP-dependent transcription factor ATF-6 beta), which is embedded in the endoplasmic reticulum membrane. Endoplasmic reticulum stress promotes processing of this form, releasing the transcription factor form that translocates into the nucleus, where it activates transcription of genes involved in the unfolded protein response (UPR). In terms of biological role, transcription factor that acts in the unfolded protein response (UPR) pathway by activating UPR target genes induced during ER stress. Binds DNA on the 5'-CCAC[GA]-3' half of the ER stress response element (ERSE) (5'-CCAATN(9)CCAC[GA]-3') when NF-Y is bound to ERSE. The polypeptide is Cyclic AMP-dependent transcription factor ATF-6 beta (ATF6B) (Homo sapiens (Human)).